Reading from the N-terminus, the 463-residue chain is Probable glycosyltransferase 3 (463 aa).

Topologically, residues M1 to T24 are cytoplasmic. A helical; Signal-anchor for type II membrane protein membrane pass occupies residues F25 to G47. The Lumenal portion of the chain corresponds to I48–S463. Positions E82–N125 are disordered. Over residues T87–L99 the composition is skewed to acidic residues. Residues A103–A118 are compositionally biased toward low complexity. N110, N125, and N442 each carry an N-linked (GlcNAc...) asparagine glycan.

The protein belongs to the glycosyltransferase 34 family.

The protein resides in the golgi apparatus membrane. Probable glycosyltransferase that may be involved in the biosynthesis of xyloglucan. This Oryza sativa subsp. japonica (Rice) protein is Probable glycosyltransferase 3.